A 631-amino-acid chain; its full sequence is Phosphomethylpyrimidine synthase (631 aa).

Substrate is bound by residues N239, M268, Y297, H333, 353–355 (SRG), 394–397 (DGLR), and E433. H437 contacts Zn(2+). Y460 provides a ligand contact to substrate. H501 contacts Zn(2+). 3 residues coordinate [4Fe-4S] cluster: C581, C584, and C589.

Belongs to the ThiC family. In terms of assembly, homodimer. [4Fe-4S] cluster serves as cofactor.

It carries out the reaction 5-amino-1-(5-phospho-beta-D-ribosyl)imidazole + S-adenosyl-L-methionine = 4-amino-2-methyl-5-(phosphooxymethyl)pyrimidine + CO + 5'-deoxyadenosine + formate + L-methionine + 3 H(+). It participates in cofactor biosynthesis; thiamine diphosphate biosynthesis. Functionally, catalyzes the synthesis of the hydroxymethylpyrimidine phosphate (HMP-P) moiety of thiamine from aminoimidazole ribotide (AIR) in a radical S-adenosyl-L-methionine (SAM)-dependent reaction. In Salmonella schwarzengrund (strain CVM19633), this protein is Phosphomethylpyrimidine synthase.